Consider the following 135-residue polypeptide: Small ribosomal subunit protein bS16m (135 aa).

The transit peptide at 1–34 (MVQLTTIFCKAYHGGHLTIRLALGGCTNRPFYRI) directs the protein to the mitochondrion.

It belongs to the bacterial ribosomal protein bS16 family. Component of the mitochondrial ribosome small subunit (28S) which comprises a 12S rRNA and about 30 distinct proteins.

It is found in the mitochondrion. This Mus musculus (Mouse) protein is Small ribosomal subunit protein bS16m (Mrps16).